Consider the following 269-residue polypeptide: Shikimate dehydrogenase (NADP(+)) (269 aa).

Shikimate-binding positions include 17 to 19 (SKS) and threonine 64. Lysine 68 (proton acceptor) is an active-site residue. Glutamate 80 is an NADP(+) binding site. Shikimate contacts are provided by asparagine 89 and aspartate 105. NADP(+) contacts are provided by residues 130–134 (GAGGA), 154–159 (NRTRAK), and methionine 213. Residue tyrosine 215 coordinates shikimate. Glycine 237 lines the NADP(+) pocket.

This sequence belongs to the shikimate dehydrogenase family. In terms of assembly, homodimer.

The catalysed reaction is shikimate + NADP(+) = 3-dehydroshikimate + NADPH + H(+). It functions in the pathway metabolic intermediate biosynthesis; chorismate biosynthesis; chorismate from D-erythrose 4-phosphate and phosphoenolpyruvate: step 4/7. In terms of biological role, involved in the biosynthesis of the chorismate, which leads to the biosynthesis of aromatic amino acids. Catalyzes the reversible NADPH linked reduction of 3-dehydroshikimate (DHSA) to yield shikimate (SA). This is Shikimate dehydrogenase (NADP(+)) from Neisseria meningitidis serogroup C / serotype 2a (strain ATCC 700532 / DSM 15464 / FAM18).